The primary structure comprises 569 residues: Dihydroorotate dehydrogenase (quinone), mitochondrial (569 aa).

The transit peptide at 1–23 directs the protein to the mitochondrion; sequence MISKLKPQFMFLPKKHILSYCRK. A helical membrane pass occupies residues 143-163; sequence IIFLLFVSLFGLYGFFESYNP. FMN is bound by residues 225-229 and Thr249; that span reads AGFDK. Residue Lys229 participates in substrate binding. Substrate contacts are provided by residues 274-278 and Asn342; that span reads NSCGF. Asn342 contacts FMN. Ser345 functions as the Nucleophile in the catalytic mechanism. Substrate is bound at residue Asn347. An FMN-binding site is contributed by Lys429. 458-459 is a binding site for substrate; that stretch reads NT. Residues 477–478, 505–507, and 528–529 contribute to the FMN site; these read SG, SGG, and YS.

This sequence belongs to the dihydroorotate dehydrogenase family. Type 2 subfamily. As to quaternary structure, monomer. It depends on FMN as a cofactor.

The protein resides in the mitochondrion inner membrane. It catalyses the reaction (S)-dihydroorotate + a quinone = orotate + a quinol. It functions in the pathway pyrimidine metabolism; UMP biosynthesis via de novo pathway; orotate from (S)-dihydroorotate (quinone route): step 1/1. Its function is as follows. Catalyzes the conversion of dihydroorotate to orotate with quinone as electron acceptor. The polypeptide is Dihydroorotate dehydrogenase (quinone), mitochondrial (Plasmodium falciparum (isolate 3D7)).